A 363-amino-acid polypeptide reads, in one-letter code: DNA replication and repair protein RecF (363 aa).

30-37 is a binding site for ATP; that stretch reads GDNAQGKT.

It belongs to the RecF family.

Its subcellular location is the cytoplasm. Functionally, the RecF protein is involved in DNA metabolism; it is required for DNA replication and normal SOS inducibility. RecF binds preferentially to single-stranded, linear DNA. It also seems to bind ATP. The sequence is that of DNA replication and repair protein RecF from Syntrophotalea carbinolica (strain DSM 2380 / NBRC 103641 / GraBd1) (Pelobacter carbinolicus).